Consider the following 34-residue polypeptide: Photosystem II reaction center protein M (34 aa).

A helical membrane pass occupies residues Ile-5–Ile-25.

It belongs to the PsbM family. In terms of assembly, PSII is composed of 1 copy each of membrane proteins PsbA, PsbB, PsbC, PsbD, PsbE, PsbF, PsbH, PsbI, PsbJ, PsbK, PsbL, PsbM, PsbT, PsbX, PsbY, PsbZ, Psb30/Ycf12, at least 3 peripheral proteins of the oxygen-evolving complex and a large number of cofactors. It forms dimeric complexes.

Its subcellular location is the plastid. It localises to the chloroplast thylakoid membrane. In terms of biological role, one of the components of the core complex of photosystem II (PSII). PSII is a light-driven water:plastoquinone oxidoreductase that uses light energy to abstract electrons from H(2)O, generating O(2) and a proton gradient subsequently used for ATP formation. It consists of a core antenna complex that captures photons, and an electron transfer chain that converts photonic excitation into a charge separation. This subunit is found at the monomer-monomer interface. The sequence is that of Photosystem II reaction center protein M from Cucumis sativus (Cucumber).